A 337-amino-acid polypeptide reads, in one-letter code: Phosphate acyltransferase (337 aa).

This sequence belongs to the PlsX family. In terms of assembly, homodimer. Probably interacts with PlsY.

It is found in the cytoplasm. The catalysed reaction is a fatty acyl-[ACP] + phosphate = an acyl phosphate + holo-[ACP]. Its pathway is lipid metabolism; phospholipid metabolism. Functionally, catalyzes the reversible formation of acyl-phosphate (acyl-PO(4)) from acyl-[acyl-carrier-protein] (acyl-ACP). This enzyme utilizes acyl-ACP as fatty acyl donor, but not acyl-CoA. This chain is Phosphate acyltransferase, found in Polynucleobacter asymbioticus (strain DSM 18221 / CIP 109841 / QLW-P1DMWA-1) (Polynucleobacter necessarius subsp. asymbioticus).